We begin with the raw amino-acid sequence, 250 residues long: Probable transcriptional regulatory protein SAV_6832 (250 aa).

The protein belongs to the TACO1 family.

The protein localises to the cytoplasm. The protein is Probable transcriptional regulatory protein SAV_6832 of Streptomyces avermitilis (strain ATCC 31267 / DSM 46492 / JCM 5070 / NBRC 14893 / NCIMB 12804 / NRRL 8165 / MA-4680).